A 1364-amino-acid polypeptide reads, in one-letter code: DNA-directed RNA polymerase subunit beta' (1364 aa).

The disordered stretch occupies residues 1-42; that stretch reads MTSSSSKSNKSRKSSKAAKDTTPVHESASRPLSKTPPPFRNH. The Zn(2+) site is built by C250, C317, C324, and C327.

This sequence belongs to the RNA polymerase beta' chain family. RpoC2 subfamily. In terms of assembly, in cyanobacteria the RNAP catalytic core is composed of 2 alpha, 1 beta, 1 beta', 1 gamma and 1 omega subunit. When a sigma factor is associated with the core the holoenzyme is formed, which can initiate transcription. The cofactor is Zn(2+).

The catalysed reaction is RNA(n) + a ribonucleoside 5'-triphosphate = RNA(n+1) + diphosphate. In terms of biological role, DNA-dependent RNA polymerase catalyzes the transcription of DNA into RNA using the four ribonucleoside triphosphates as substrates. The protein is DNA-directed RNA polymerase subunit beta' of Parasynechococcus marenigrum (strain WH8102).